The sequence spans 146 residues: 3-dehydroquinate dehydratase (146 aa).

The active-site Proton acceptor is the Tyr-24. Substrate is bound by residues Asn-73, His-79, and Asp-86. The active-site Proton donor is His-99. Substrate contacts are provided by residues 100–101 and Arg-110; that span reads LS.

It belongs to the type-II 3-dehydroquinase family. Homododecamer.

The catalysed reaction is 3-dehydroquinate = 3-dehydroshikimate + H2O. Its pathway is metabolic intermediate biosynthesis; chorismate biosynthesis; chorismate from D-erythrose 4-phosphate and phosphoenolpyruvate: step 3/7. Its function is as follows. Catalyzes a trans-dehydration via an enolate intermediate. In Shewanella baltica (strain OS223), this protein is 3-dehydroquinate dehydratase.